A 1827-amino-acid chain; its full sequence is Phenolphthiocerol/phthiocerol polyketide synthase subunit C (1827 aa).

One can recognise a Ketosynthase family 3 (KS3) domain in the interval 35-461; that stretch reads CEPVAVVGIG…GTNAHVVVEQ (427 aa). Catalysis depends on for beta-ketoacyl synthase activity residues C207, H342, and H383. The segment at 566–876 is acyltransferase; it reads VFVYSGQGSQ…LAAVGVAASE (311 aa). The active-site For malonyltransferase activity is S654. The interval 910 to 1037 is N-terminal hotdog fold; it reads HPLLGAHIEM…AKVEQSPREC (128 aa). The tract at residues 910–1076 is dehydratase; the sequence is HPLLGAHIEM…QHHGPAFAAL (167 aa). In terms of domain architecture, PKS/mFAS DH spans 910–1198; it reads HPLLGAHIEM…LRRVERRAVP (289 aa). H942 (proton acceptor; for dehydratase activity) is an active-site residue. The tract at residues 1050 to 1198 is C-terminal hotdog fold; that stretch reads GTTVSPADFY…LRRVERRAVP (149 aa). D1111 serves as the catalytic Proton donor; for dehydratase activity. Residues 1439–1617 form a beta-ketoacyl reductase region; it reads ASYVVTGGLG…VINWGPWSEV (179 aa). Residue 1440-1485 participates in NADP(+) binding; it reads SYVVTGGLGGLGLVVARWLVDRGAGRVVLGGRSDPTDEQCNVLAEL. A Carrier domain is found at 1706 to 1785; it reads RAVTERMCAR…DLTADLMRQL (80 aa). Position 1745 is an O-(pantetheine 4'-phosphoryl)serine (S1745).

It depends on NADP(+) as a cofactor. The cofactor is pantetheine 4'-phosphate.

The catalysed reaction is icosanoyl-[(phenol)carboxyphthiodiolenone synthase] + 2 (S)-methylmalonyl-CoA + 3 malonyl-CoA + 5 NADPH + 10 H(+) = C32-carboxyphthiodiolenone-[(phenol)carboxyphthiodiolenone synthase] + 5 CO2 + 5 NADP(+) + 5 CoA + 2 H2O. The enzyme catalyses docosanoyl-[(phenol)carboxyphthiodiolenone synthase] + 2 (S)-methylmalonyl-CoA + 3 malonyl-CoA + 5 NADPH + 10 H(+) = C34-carboxyphthiodiolenone-[(phenol)carboxyphthiodiolenone synthase] + 5 CO2 + 5 NADP(+) + 5 CoA + 2 H2O. It carries out the reaction 17-(4-hydroxyphenyl)heptadecanoyl-[(phenol)carboxyphthiodiolenone synthase] + 2 (S)-methylmalonyl-CoA + 3 malonyl-CoA + 5 NADPH + 10 H(+) = C35-(phenol)carboxyphthiodiolenone-[(phenol)carboxyphthiodiolenone synthase] + 5 CO2 + 5 NADP(+) + 5 CoA + 2 H2O. It catalyses the reaction 19-(4-hydroxyphenyl)nonadecanoyl-[(phenol)carboxyphthiodiolenone synthase] + 2 (S)-methylmalonyl-CoA + 3 malonyl-CoA + 5 NADPH + 10 H(+) = C37-(phenol)carboxyphthiodiolenone-[(phenol)carboxyphthiodiolenone synthase] + 5 CO2 + 5 NADP(+) + 5 CoA + 2 H2O. The protein operates within lipid metabolism; fatty acid biosynthesis. In terms of biological role, part of the PpsABCDE complex involved in the biosynthesis of the lipid core common to phthiocerols and phenolphthiocerols by successive additions of malonyl-CoA or methylmalonyl-CoA extender units. PpsA can accept as substrate the activated forms of either icosanoyl (C20), docosanoyl (C22) or lignoceroyl (C24) groups from FadD26, or a (4-hydroxyphenyl)-C17 or (4-hydroxyphenyl)-C19 fatty acyl from FadD29. PpsA initiates the biosynthesis and extends its substrate using a malonyl-CoA extender unit. The PpsB and PpsC proteins add the second and third malonyl-CoA extender units. PpsD adds an (R)-methylmalonyl unit and PpsE adds a second (R)-methylmalonyl unit. The incorporation of the methylmalonyl units results in formation of two branched methyl groups in the elongated product. The chain is Phenolphthiocerol/phthiocerol polyketide synthase subunit C (ppsD) from Mycobacterium bovis (strain ATCC BAA-935 / AF2122/97).